We begin with the raw amino-acid sequence, 201 residues long: Peptidyl-tRNA hydrolase (201 aa).

Tyrosine 14 provides a ligand contact to tRNA. Histidine 19 acts as the Proton acceptor in catalysis. Tyrosine 64, asparagine 66, and asparagine 112 together coordinate tRNA.

The protein belongs to the PTH family. Monomer.

The protein resides in the cytoplasm. The enzyme catalyses an N-acyl-L-alpha-aminoacyl-tRNA + H2O = an N-acyl-L-amino acid + a tRNA + H(+). Functionally, hydrolyzes ribosome-free peptidyl-tRNAs (with 1 or more amino acids incorporated), which drop off the ribosome during protein synthesis, or as a result of ribosome stalling. In terms of biological role, catalyzes the release of premature peptidyl moieties from peptidyl-tRNA molecules trapped in stalled 50S ribosomal subunits, and thus maintains levels of free tRNAs and 50S ribosomes. In Bradyrhizobium sp. (strain ORS 278), this protein is Peptidyl-tRNA hydrolase.